Reading from the N-terminus, the 459-residue chain is Zinc finger transcription factor lin-29 (459 aa).

Residues 1-14 show a composition bias toward polar residues; it reads MDQTVLDSAFNSPV. Residues 1–73 are disordered; the sequence is MDQTVLDSAF…GSTGSTPAHH (73 aa). The segment covering 16 to 56 has biased composition (low complexity); it reads SGIAGTTTGSGSTTHFGVGTNFKVSVRSSSRSTDGTDSTDG. Positions 57-73 are enriched in polar residues; the sequence is ANSDNVTGSTGSTPAHH. 5 C2H2-type zinc fingers span residues 151 to 173, 180 to 202, 208 to 232, 238 to 260, and 269 to 291; these read YKCT…MRIH, GPCN…IRTH, YKCK…SRCH, FKCN…IPKH, and HICP…MTKH. Positions 390-406 are interacts with mab-10; the sequence is PGFNMITPLENIQRYNG. The span at 423–444 shows a compositional bias: low complexity; that stretch reads VSSTPSSTSSSSAGSSSSQGGV. The segment at 423-459 is disordered; the sequence is VSSTPSSTSSSSAGSSSSQGGVFNPQSLINNMKNHSY. Polar residues predominate over residues 446 to 459; sequence NPQSLINNMKNHSY.

In terms of assembly, interacts (via C-terminus) with transcription cofactor mab-10. Expressed in lateral hypodermal seam cells (at protein level).

It is found in the nucleus. Functionally, transcription factor which regulates the expression of various genes, including those involved in cuticle synthesis and maintenance, such as collagens, and in lipid metabolism. Binds to promoter regions of genes, at 5'-[(T/G)TTTTTT(A/T/C/G)]-3' consensus sequences. Heterochronic protein which controls the choice of stage specific cell fates, including at the juvenile to adult transition. Promotes differentiation, together with transcriptional cofactor mab-10, perhaps as part of a transcriptional complex. Required for vulval morphogenesis and egg laying; perhaps by acting in a subset of the lateral seam cells. Involved in the exit of seam cells from the cell cycle. Required for specification of uterine pi-cell fate, acting upstream of lin-12 Notch signaling, perhaps via maintenance of lag-2 expression in the anchor cell (AC). Involved in morphogenesis of the specialized male tail used in mating. Acts cell non-autonomously from the hypodermis to regulate expression of genes in the intestine, including genes involved in lipid metabolism. May regulate vitellogenesis via the mTORC2 signaling mediated pathway, independently of daf-16. May promote nuclear accumulation of mab-10 in seam cells post-transcriptionally. Dispensable for seam cell fusion. In terms of biological role, required for seam cell fusion. This chain is Zinc finger transcription factor lin-29, found in Caenorhabditis elegans.